The primary structure comprises 562 residues: Protein wntless (562 aa).

The Cytoplasmic portion of the chain corresponds to Met-1 to Lys-13. The helical transmembrane segment at Leu-14–Leu-34 threads the bilayer. Topologically, residues Tyr-35–Gln-239 are lumenal. A glycan (N-linked (GlcNAc...) asparagine) is linked at Asn-58. Residues Ile-240–Trp-260 traverse the membrane as a helical segment. At Arg-261–Pro-270 the chain is on the cytoplasmic side. A helical membrane pass occupies residues Ala-271–Leu-291. The Lumenal portion of the chain corresponds to Glu-292 to Gln-311. The helical transmembrane segment at Gly-312–Ile-332 threads the bilayer. Residues Gln-333–Arg-344 lie on the Cytoplasmic side of the membrane. A helical membrane pass occupies residues Tyr-345–Cys-365. At Glu-366–Thr-390 the chain is on the lumenal side. Residues Phe-391–Trp-411 traverse the membrane as a helical segment. At Lys-412–Arg-441 the chain is on the cytoplasmic side. A helical membrane pass occupies residues Phe-442–Met-462. Topologically, residues Gly-463–Ser-482 are lumenal. The helical transmembrane segment at Ala-483–Tyr-503 threads the bilayer. The Cytoplasmic segment spans residues Ala-504–Asp-562. A disordered region spans residues His-539–Asp-562. Polar residues predominate over residues Pro-541–Thr-556.

This sequence belongs to the wntless family. As to quaternary structure, interacts with wg; in the Golgi. Interacts with Vps35, a component of the retromer complex; wls stability is regulated by Vps35.

The protein resides in the presynaptic cell membrane. Its subcellular location is the postsynaptic cell membrane. It is found in the cell membrane. It localises to the endoplasmic reticulum membrane. The protein localises to the endosome membrane. The protein resides in the golgi apparatus membrane. A segment polarity gene required for wingless (wg)-dependent patterning processes, acting in both wg-sending cells and wg-target cells. In non-neuronal cells wls directs wg secretion. The wls traffic loop encompasses the Golgi, the cell surface, an endocytic compartment and a retrograde route leading back to the Golgi, and involves clathrin-mediated endocytosis and the retromer complex (a conserved protein complex consisting of Vps35 and Vps26). In neuronal cells (the larval motorneuron NMJ), the wg signal moves across the synapse via the release of wls-containing exosome-like vesicles. Postsynaptic wls is required for the trafficking of fz2 through the fz2-interacting protein Grip. This Drosophila ananassae (Fruit fly) protein is Protein wntless.